A 64-amino-acid polypeptide reads, in one-letter code: Large ribosomal subunit protein bL35 (64 aa).

2 stretches are compositionally biased toward basic residues: residues 1-15 (MPKA…KRFR) and 23-33 (VRQKANRRHLL). The segment at 1-47 (MPKAKTHSGASKRFRTTGSGKIVRQKANRRHLLEHKPTSRTRRLDGR) is disordered. The span at 34–46 (EHKPTSRTRRLDG) shows a compositional bias: basic and acidic residues.

The protein belongs to the bacterial ribosomal protein bL35 family.

The protein is Large ribosomal subunit protein bL35 of Mycobacteroides abscessus (strain ATCC 19977 / DSM 44196 / CCUG 20993 / CIP 104536 / JCM 13569 / NCTC 13031 / TMC 1543 / L948) (Mycobacterium abscessus).